A 145-amino-acid chain; its full sequence is Ribosome maturation factor RimP (145 aa).

It belongs to the RimP family.

Its subcellular location is the cytoplasm. Its function is as follows. Required for maturation of 30S ribosomal subunits. This is Ribosome maturation factor RimP from Borreliella burgdorferi (strain ATCC 35210 / DSM 4680 / CIP 102532 / B31) (Borrelia burgdorferi).